The primary structure comprises 106 residues: Circadian clock oscillator protein KaiB (106 aa).

It belongs to the KaiB family. The KaiABC complex composition changes during the circadian cycle to control KaiC phosphorylation. Complexes KaiC(6), KaiA(2-4):KaiC(6), KaiB(6):KaiC(6) and KaiC(6):KaiB(6):KaiA(12) are among the most important forms, many form cooperatively. Undergoes a major conformational rearrangment; in the free state forms homotetramers as a dimer of dimers. When bound to the CI domain of KaiC switches to a monomeric thioredoxin-fold (KaiB(fs)). KaiB(fs) binds CikA, leading it to dephosphorylate phospho-RpaA.

In terms of biological role, key component of the KaiABC oscillator complex, which constitutes the main circadian regulator in cyanobacteria. Complex composition changes during the circadian cycle to control KaiC phosphorylation. KaiA stimulates KaiC autophosphorylation, while KaiB sequesters KaiA, leading to KaiC autodephosphorylation. Phospho-Ser-431 KaiC accumulation triggers binding of KaiB to form the KaiB(6):KaiC(6) complex, leading to changes in output regulators CikA and SasA. KaiB switches to a thioredoxin-like fold (KaiB(fs)) when bound to KaiC. KaiB(6):KaiC(6) formation exposes a site for KaiA binding that sequesters KaiA from KaiC, making the KaiC(6):KaiB(6):KaiA(12) complex that results in KaiC autodephosphorylation. Its function is as follows. A metamorphic protein which reversibly switches between an inactive tetrameric fold and a rare, thioredoxin-like monomeric fold (KaiB(fs)). KaiB(fs) binds phospho-KaiC, KaiA and CikA. KaiA and CikA compete for binding to KaiB(fs), and KaiB(fs) and SasA compete for binding to KaiC, thus the clock oscillator and output signal pathway are tightly coupled. The protein is Circadian clock oscillator protein KaiB of Gloeothece citriformis (strain PCC 7424) (Cyanothece sp. (strain PCC 7424)).